A 221-amino-acid polypeptide reads, in one-letter code: MNNTVLILKKISKHYKQGNTIVKVLDDLNLTANEGELIAIIGSSGSGKSTLLHIAGLLDKPTNGQVIIPNSKYKKYHLIRLYYLGFIYQQHHLLKDFTALENVIIPRLIRGLDQKEAIRDATKILDDLGLEKKLYNMPGELSGGEQQRVAIARSLINKPRIILADEPTGNLDPKSTNEVFNLFLKVAQKQNTTVIMVTHNHELAHKMDKLYNLKNGLLNIA.

The 215-residue stretch at 6-220 (LILKKISKHY…YNLKNGLLNI (215 aa)) folds into the ABC transporter domain. 42–49 (GSSGSGKS) contributes to the ATP binding site.

This sequence belongs to the ABC transporter superfamily. Lipoprotein translocase (TC 3.A.1.125) family. As to quaternary structure, the complex is composed of two ATP-binding proteins (LolD) and two transmembrane proteins (LolC and LolE).

Its subcellular location is the cell inner membrane. In terms of biological role, part of the ABC transporter complex LolCDE involved in the translocation of mature outer membrane-directed lipoproteins, from the inner membrane to the periplasmic chaperone, LolA. Responsible for the formation of the LolA-lipoprotein complex in an ATP-dependent manner. This chain is Lipoprotein-releasing system ATP-binding protein LolD, found in Rickettsia typhi (strain ATCC VR-144 / Wilmington).